Here is a 279-residue protein sequence, read N- to C-terminus: Tryptophan 2,3-dioxygenase (279 aa).

Substrate-binding positions include 48-52 (FIVIH), Y110, and R114. Position 237 (H237) interacts with heme. T251 contacts substrate.

Belongs to the tryptophan 2,3-dioxygenase family. Homotetramer. The cofactor is heme.

It catalyses the reaction L-tryptophan + O2 = N-formyl-L-kynurenine. It functions in the pathway amino-acid degradation; L-tryptophan degradation via kynurenine pathway; L-kynurenine from L-tryptophan: step 1/2. Its function is as follows. Heme-dependent dioxygenase that catalyzes the oxidative cleavage of the L-tryptophan (L-Trp) pyrrole ring and converts L-tryptophan to N-formyl-L-kynurenine. Catalyzes the oxidative cleavage of the indole moiety. The polypeptide is Tryptophan 2,3-dioxygenase (Bacillus thuringiensis (strain Al Hakam)).